The chain runs to 178 residues: C-phycoerythrin class 2 subunit beta (178 aa).

Phycourobilin contacts are provided by Cys50 and Cys61. Cys82 and Cys159 together coordinate (2R,3E)-phycoerythrobilin.

This sequence belongs to the phycobiliprotein family. As to quaternary structure, heterodimer of an alpha and a beta chain. In terms of processing, contains two covalently linked phycoerythrobilin chromophores and one covalently linked phycourobilin chromophore.

The protein localises to the cellular thylakoid membrane. Its function is as follows. Light-harvesting photosynthetic bile pigment-protein from the phycobiliprotein complex. This is C-phycoerythrin class 2 subunit beta (mpeB) from Synechococcus sp. (strain WH8020).